A 350-amino-acid chain; its full sequence is Pleckstrin (350 aa).

Residues 4–101 (KRIREGYLVK…WVRDIKKAIK (98 aa)) form the PH 1 domain. Residue Lys-64 is modified to N6-acetyllysine. Phosphoserine occurs at positions 113 and 117. Positions 136–221 (PEKGIKELNL…SPDAFYYFPD (86 aa)) constitute a DEP domain. One can recognise a PH 2 domain in the interval 244 to 347 (VIIKQGCLLK…WIKAIQVASR (104 aa)).

Functionally, major protein kinase C substrate of platelets. The polypeptide is Pleckstrin (Plek) (Mus musculus (Mouse)).